A 340-amino-acid chain; its full sequence is Protein FAM50A-A (340 aa).

2 disordered regions span residues 1–22 (MAQY…KKRE) and 123–178 (NLEE…EEEN). Positions 124–146 (LEEDEECEDEEGEEEESDKEDPP) are enriched in acidic residues. Positions 169–178 (PDRDREEEEN) are enriched in basic and acidic residues.

Its subcellular location is the nucleus. Probably involved in the regulation of pre-mRNA splicing. The chain is Protein FAM50A-A (fam50a-a) from Xenopus laevis (African clawed frog).